The following is a 572-amino-acid chain: Potassium-transporting ATPase potassium-binding subunit (572 aa).

Helical transmembrane passes span 6-26, 66-86, 135-155, 177-197, 251-271, 283-303, 382-402, 428-448, 493-513, and 537-557; these read ILFV…GTYI, FFSL…VLLL, ALAV…IVLI, IFWI…FQGV, TIIT…ALTY, GWMI…VMTI, IFGG…LAVF, MFAL…AAVI, ITIA…VMML, and FIFS…TIFP.

Belongs to the KdpA family. The system is composed of three essential subunits: KdpA, KdpB and KdpC.

Its subcellular location is the cell inner membrane. Its function is as follows. Part of the high-affinity ATP-driven potassium transport (or Kdp) system, which catalyzes the hydrolysis of ATP coupled with the electrogenic transport of potassium into the cytoplasm. This subunit binds the periplasmic potassium ions and delivers the ions to the membrane domain of KdpB through an intramembrane tunnel. In Francisella philomiragia subsp. philomiragia (strain ATCC 25017 / CCUG 19701 / FSC 153 / O#319-036), this protein is Potassium-transporting ATPase potassium-binding subunit.